Consider the following 102-residue polypeptide: Co-chaperonin GroES (102 aa).

The protein belongs to the GroES chaperonin family. In terms of assembly, heptamer of 7 subunits arranged in a ring. Interacts with the chaperonin GroEL.

It localises to the cytoplasm. Its function is as follows. Together with the chaperonin GroEL, plays an essential role in assisting protein folding. The GroEL-GroES system forms a nano-cage that allows encapsulation of the non-native substrate proteins and provides a physical environment optimized to promote and accelerate protein folding. GroES binds to the apical surface of the GroEL ring, thereby capping the opening of the GroEL channel. This Vibrio harveyi (Beneckea harveyi) protein is Co-chaperonin GroES.